The primary structure comprises 122 residues: Holo-[acyl-carrier-protein] synthase (122 aa).

2 residues coordinate Mg(2+): D8 and E52.

Belongs to the P-Pant transferase superfamily. AcpS family. It depends on Mg(2+) as a cofactor.

The protein localises to the cytoplasm. The enzyme catalyses apo-[ACP] + CoA = holo-[ACP] + adenosine 3',5'-bisphosphate + H(+). In terms of biological role, transfers the 4'-phosphopantetheine moiety from coenzyme A to a Ser of acyl-carrier-protein. This Lachnoclostridium phytofermentans (strain ATCC 700394 / DSM 18823 / ISDg) (Clostridium phytofermentans) protein is Holo-[acyl-carrier-protein] synthase.